Reading from the N-terminus, the 426-residue chain is Histidine--tRNA ligase (426 aa).

The protein belongs to the class-II aminoacyl-tRNA synthetase family. Homodimer.

It localises to the cytoplasm. It carries out the reaction tRNA(His) + L-histidine + ATP = L-histidyl-tRNA(His) + AMP + diphosphate + H(+). In Colwellia psychrerythraea (strain 34H / ATCC BAA-681) (Vibrio psychroerythus), this protein is Histidine--tRNA ligase.